The primary structure comprises 154 residues: Endoribonuclease YbeY (154 aa).

3 residues coordinate Zn(2+): His113, His117, and His123.

This sequence belongs to the endoribonuclease YbeY family. Requires Zn(2+) as cofactor.

It localises to the cytoplasm. Its function is as follows. Single strand-specific metallo-endoribonuclease involved in late-stage 70S ribosome quality control and in maturation of the 3' terminus of the 16S rRNA. This Vibrio vulnificus (strain YJ016) protein is Endoribonuclease YbeY.